The primary structure comprises 215 residues: Protein Thf1 (215 aa).

Positions 182-213 (ERMDQAVELVEETIAAEKRKKERRLEEQAQRT) form a coiled coil.

Belongs to the THF1 family.

In terms of biological role, may be involved in photosynthetic membrane biogenesis. This chain is Protein Thf1, found in Synechococcus sp. (strain CC9605).